The sequence spans 576 residues: Colicin-E7 (576 aa).

Disordered stretches follow at residues Met1–Ser75, Ser421–Asp478, and Asp506–Asp557. Gly residues predominate over residues Asn19–Asp35. The segment covering Gly36–Pro45 has biased composition (low complexity). Gly residues predominate over residues Trp46–Ser75. 2 stretches are compositionally biased toward basic and acidic residues: residues Leu424 to Arg447 and Ser535 to Pro548. The Zn(2+) site is built by His544, His569, and His573.

It belongs to the colicin/pyosin nuclease family.

Functionally, this plasmid-coded bactericidal protein is an endonuclease active on both single- and double-stranded DNA but with undefined specificity. Its function is as follows. Colicins are polypeptide toxins produced by and active against E.coli and closely related bacteria. The polypeptide is Colicin-E7 (colE7) (Escherichia coli).